Reading from the N-terminus, the 74-residue chain is Translation initiation factor IF-1 (74 aa).

One can recognise an S1-like domain in the interval 1–73 (MSNKEDIIKM…TKGRIVYRKK (73 aa)).

Belongs to the IF-1 family. Component of the 30S ribosomal translation pre-initiation complex which assembles on the 30S ribosome in the order IF-2 and IF-3, IF-1 and N-formylmethionyl-tRNA(fMet); mRNA recruitment can occur at any time during PIC assembly.

Its subcellular location is the cytoplasm. In terms of biological role, one of the essential components for the initiation of protein synthesis. Stabilizes the binding of IF-2 and IF-3 on the 30S subunit to which N-formylmethionyl-tRNA(fMet) subsequently binds. Helps modulate mRNA selection, yielding the 30S pre-initiation complex (PIC). Upon addition of the 50S ribosomal subunit IF-1, IF-2 and IF-3 are released leaving the mature 70S translation initiation complex. This Thermosipho melanesiensis (strain DSM 12029 / CIP 104789 / BI429) protein is Translation initiation factor IF-1.